Here is a 550-residue protein sequence, read N- to C-terminus: Transcription factor 7-like 1-C (550 aa).

The span at 1–11 (MPQLNSGGGDE) shows a compositional bias: gly residues. Residues 1–60 (MPQLNSGGGDELGANDELIRFKDEGEQEEKSPGEGSAEDLADVKSSLVNESENHSSDSDS) are interaction with CTNNB1-A. Disordered regions lie at residues 1–76 (MPQL…EKPR), 182–206 (GTPP…HPSE), and 390–473 (WSAR…SLTT). 2 stretches are compositionally biased toward basic and acidic residues: residues 17–32 (ELIR…EKSP) and 51–76 (SENH…EKPR). Residues 108–311 (LGGITCPMVP…SPNLSRKSNV (204 aa)) form an interaction with AES and TLE4-A region. A DNA-binding region (HMG box) is located at residues 323 to 391 (IKKPLNAFML…LHSQLYPSWS (69 aa)). Residues 406–415 (KQSPEMENYT) show a composition bias toward basic and acidic residues. Positions 407 to 550 (QSPEMENYTK…PLSLVTRSSD (144 aa)) are interaction with CTBP-B. A compositionally biased stretch (low complexity) spans 444 to 463 (SPATPSAALASPAAPAATHS). The span at 464–473 (EQAQPLSLTT) shows a compositional bias: polar residues.

Belongs to the TCF/LEF family. As to quaternary structure, interacts with csnk1e, ctnnb1-A, ctbp-B, dact1-A and gsk3b. May interact with ase and tle4-A. Phosphorylated. Phosphorylation by csnk1e promotes binding to ctnnb1-A while phosphorylation by gsk3b may reverse this effect.

It is found in the nucleus. Participates in the Wnt signaling pathway. Binds to DNA and acts as a repressor in the absence of ctnnb1-A and possibly ctnnb1-B, and as an activator in the presence of these proteins. Required early in development for the establishment of the dorsal body axis in response to maternal Wnt signaling. The polypeptide is Transcription factor 7-like 1-C (tcf7l1-c) (Xenopus laevis (African clawed frog)).